The primary structure comprises 549 residues: Glucose-6-phosphate isomerase (549 aa).

Catalysis depends on E355, which acts as the Proton donor. Active-site residues include H386 and K514.

The protein belongs to the GPI family.

It is found in the cytoplasm. The catalysed reaction is alpha-D-glucose 6-phosphate = beta-D-fructose 6-phosphate. It functions in the pathway carbohydrate biosynthesis; gluconeogenesis. The protein operates within carbohydrate degradation; glycolysis; D-glyceraldehyde 3-phosphate and glycerone phosphate from D-glucose: step 2/4. In terms of biological role, catalyzes the reversible isomerization of glucose-6-phosphate to fructose-6-phosphate. The polypeptide is Glucose-6-phosphate isomerase (Salmonella typhi).